The sequence spans 417 residues: Dihydrolipoyllysine-residue succinyltransferase component of 2-oxoglutarate dehydrogenase complex (417 aa).

One can recognise a Lipoyl-binding domain in the interval 1–76 (MAEIKVPELA…QVGEIIGTIS (76 aa)). Position 42 is an N6-lipoyllysine (Lys-42). The tract at residues 75-191 (ISEGAGESSA…SFDKPVEVQK (117 aa)) is disordered. 2 stretches are compositionally biased toward basic and acidic residues: residues 89–103 (EKTE…EKQA) and 152–163 (RKQDVEAYEKPA). The Peripheral subunit-binding (PSBD) domain occupies 123–160 (IASPSARKLAREKGIDLSQVPTGDPLGRVRKQDVEAYE). Over residues 164 to 182 (SKPAPQQKQQPQAQKAQQS) the composition is skewed to low complexity. Catalysis depends on residues His-388 and Asp-392.

Belongs to the 2-oxoacid dehydrogenase family. In terms of assembly, forms a 24-polypeptide structural core with octahedral symmetry. Part of the 2-oxoglutarate dehydrogenase (OGDH) complex composed of E1 (2-oxoglutarate dehydrogenase), E2 (dihydrolipoamide succinyltransferase) and E3 (dihydrolipoamide dehydrogenase); the complex contains multiple copies of the three enzymatic components (E1, E2 and E3). (R)-lipoate is required as a cofactor.

The enzyme catalyses N(6)-[(R)-dihydrolipoyl]-L-lysyl-[protein] + succinyl-CoA = N(6)-[(R)-S(8)-succinyldihydrolipoyl]-L-lysyl-[protein] + CoA. Its pathway is amino-acid degradation; L-lysine degradation via saccharopine pathway; glutaryl-CoA from L-lysine: step 6/6. Functionally, E2 component of the 2-oxoglutarate dehydrogenase (OGDH) complex which catalyzes the second step in the conversion of 2-oxoglutarate to succinyl-CoA and CO(2). The chain is Dihydrolipoyllysine-residue succinyltransferase component of 2-oxoglutarate dehydrogenase complex (odhB) from Bacillus subtilis (strain 168).